The chain runs to 515 residues: BURP domain-containing protein 9 (515 aa).

The first 29 residues, 1 to 29, serve as a signal peptide directing secretion; that stretch reads MKATGGPLPLILFLLIIIVLITAQHTAIA. The BURP domain maps to 292-507; it reads YFFEDNLAPG…GRGSIIWVPV (216 aa). Asparagine 321, asparagine 332, and asparagine 470 each carry an N-linked (GlcNAc...) asparagine glycan.

As to expression, expressed in shoot and panicles.

The polypeptide is BURP domain-containing protein 9 (BURP9) (Oryza sativa subsp. japonica (Rice)).